A 160-amino-acid chain; its full sequence is Transcription elongation factor GreA (160 aa).

Residues 1–71 (MAEKTYPMTK…GQISTLETQI (71 aa)) are a coiled coil.

The protein belongs to the GreA/GreB family.

Necessary for efficient RNA polymerase transcription elongation past template-encoded arresting sites. The arresting sites in DNA have the property of trapping a certain fraction of elongating RNA polymerases that pass through, resulting in locked ternary complexes. Cleavage of the nascent transcript by cleavage factors such as GreA or GreB allows the resumption of elongation from the new 3'terminus. GreA releases sequences of 2 to 3 nucleotides. This is Transcription elongation factor GreA from Streptococcus uberis (strain ATCC BAA-854 / 0140J).